The following is a 327-amino-acid chain: Glycoprotein integral membrane protein 1 (327 aa).

Positions 1–23 are cleaved as a signal peptide; that stretch reads MEGGLSAPLSVRLLLFIALPAAG. The Extracellular portion of the chain corresponds to 24–259; that stretch reads WLTTNAPRPP…LCRFWSSVVP (236 aa). N-linked (GlcNAc...) asparagine glycans are attached at residues asparagine 44, asparagine 62, and asparagine 146. The chain crosses the membrane as a helical span at residues 260-280; it reads VLFMFLDVMVVGVLGAAGVIA. The Cytoplasmic segment spans residues 281–327; that stretch reads VLKLLFPVCENKGILQVDKMNGISVPIILYPDGSEKTAQKLTDKTDI.

The protein localises to the membrane. This chain is Glycoprotein integral membrane protein 1 (Ginm1), found in Mus musculus (Mouse).